Reading from the N-terminus, the 300-residue chain is NAD kinase (300 aa).

The active-site Proton acceptor is the D75. NAD(+) contacts are provided by residues 75–76 (DG), 149–150 (ND), R177, D179, 190–195 (TAYALS), A214, and Q248.

It belongs to the NAD kinase family. The cofactor is a divalent metal cation.

The protein localises to the cytoplasm. It carries out the reaction NAD(+) + ATP = ADP + NADP(+) + H(+). Functionally, involved in the regulation of the intracellular balance of NAD and NADP, and is a key enzyme in the biosynthesis of NADP. Catalyzes specifically the phosphorylation on 2'-hydroxyl of the adenosine moiety of NAD to yield NADP. The polypeptide is NAD kinase (Burkholderia ambifaria (strain MC40-6)).